The following is a 279-amino-acid chain: Large ribosomal subunit protein uL2 (279 aa).

Disordered regions lie at residues 29–59 and 224–279; these read PEKS…GGHK and VAMN…KNKR. The segment covering 50–59 has biased composition (basic residues); the sequence is TTRHKGGGHK. Residues 253–268 are compositionally biased toward basic and acidic residues; that stretch reads PEGRTRRPNKESDKLI. Positions 269 to 279 are enriched in basic residues; the sequence is VRRRRTGKNKR.

This sequence belongs to the universal ribosomal protein uL2 family. In terms of assembly, part of the 50S ribosomal subunit. Forms a bridge to the 30S subunit in the 70S ribosome.

Its function is as follows. One of the primary rRNA binding proteins. Required for association of the 30S and 50S subunits to form the 70S ribosome, for tRNA binding and peptide bond formation. It has been suggested to have peptidyltransferase activity; this is somewhat controversial. Makes several contacts with the 16S rRNA in the 70S ribosome. The polypeptide is Large ribosomal subunit protein uL2 (Paenarthrobacter aurescens (strain TC1)).